A 698-amino-acid polypeptide reads, in one-letter code: Quillaic acid 3-O-glycosyltransferase CSL1 (698 aa).

Residues 14-34 (ALLSRLHILFHSALVASVFYY) form a helical membrane-spanning segment. N-linked (GlcNAc...) asparagine glycosylation occurs at asparagine 38. The chain crosses the membrane as a helical span at residues 42-62 (GPAWALMTFAELTLAFIWALT). The UDP-alpha-D-glucose site is built by lysine 99 and glutamate 100. Aspartate 129 is a catalytic residue. An N-linked (GlcNAc...) asparagine glycan is attached at asparagine 317. The active site involves serine 436. Transmembrane regions (helical) follow at residues 478–498 (WTSG…YAMS), 508–528 (YAYF…GVVL), 546–566 (WLLA…YEVL), 581–601 (IWII…MLNK), 636–656 (MFMV…FGGL), and 669–689 (FAQL…MEEI).

The protein belongs to the glycosyltransferase 2 family. Plant cellulose synthase-like G subfamily. Mainly expressed in flowers and flower buds and, to a lesser extent, in leaves, stems and roots.

The protein resides in the golgi apparatus membrane. It functions in the pathway secondary metabolite biosynthesis; terpenoid biosynthesis. In terms of biological role, component of the oleanane-type triterpene saponins (e.g. saponarioside A and saponarioside B) biosynthetic pathway, leading to the production of natural products with detergent properties used as traditional sources of soap. Glycosyltransferase that mediates the conversion of quillaic acid (QA) to QA-mono via the initiation of the C-3 sugar chain. The sequence is that of Quillaic acid 3-O-glycosyltransferase CSL1 from Saponaria officinalis (Common soapwort).